A 718-amino-acid chain; its full sequence is Kinesin-2a (718 aa).

The 331-residue stretch at 5–335 (NIKVIVRCRP…LRYADRAKQI (331 aa)) folds into the Kinesin motor domain. 97 to 104 (GQTGAGKT) lines the ATP pocket. ADP is bound by residues Gly100, Gly102, Lys103, Thr104, and Trp105. Thr104 contributes to the Mg(2+) binding site. Residues 432–477 (SRKAADELEAKRRALAEAKQKRESELEQKEALNKEAIVTLTDLKSQ) are a coiled coil.

The protein belongs to the TRAFAC class myosin-kinesin ATPase superfamily. Kinesin family. Kinesin II subfamily. As to quaternary structure, monomer.

The protein resides in the cell projection. The protein localises to the cilium. It localises to the flagellum. It is found in the cytoplasm. Its subcellular location is the cytoskeleton. The protein resides in the flagellum axoneme. The protein localises to the flagellum basal body. In terms of biological role, involved in anterograde intraflagellar transport (IFT). Involved in flagellar assembly. This chain is Kinesin-2a, found in Giardia intestinalis (strain ATCC 50803 / WB clone C6) (Giardia lamblia).